We begin with the raw amino-acid sequence, 380 residues long: MGGIRLDTKQLKQDIIDYAYTIGIDSIGFTTADPFDELKQKLEAYHANGYASGFEESDIALRTEPKLSLPTARSIIAIAVGYPNKLKGAPKSVRGDRRGLFARASWGQDYHTIMRKRLDMLAAFIESKVPDVEIKSMVDTGVLSDRAVAERAGLGFVGRNGFVINPKLGTWTYLGEMLVSIPFEPDDPLLDSCGDCTICVDRCPTSALVGNGQLNSQKCISFLTQTKGYMPDQYRYKIGNRLYGCDTCQQVCPKNRGINTEQDDIILEPEILKPRLVPLLRMSNKEFKQTYGHLAGAWRGKKPIQRNAILALAHFNEVDAIPELKKVATTDERPLIRATAYWAIGQILGEEARDFINANYDQEDAEVQNEMIKGLDTRRE.

Residue Asp139 is the Proton donor of the active site. One can recognise a 4Fe-4S ferredoxin-type 1 domain in the interval 181-213; that stretch reads IPFEPDDPLLDSCGDCTICVDRCPTSALVGNGQ. Cys193, Cys196, Cys199, Cys203, Cys219, Cys245, Cys248, and Cys252 together coordinate [4Fe-4S] cluster. A 4Fe-4S ferredoxin-type 2 domain is found at 234–263; it reads YRYKIGNRLYGCDTCQQVCPKNRGINTEQD.

It belongs to the QueG family. As to quaternary structure, monomer. The cofactor is cob(II)alamin. [4Fe-4S] cluster is required as a cofactor.

It is found in the cytoplasm. It carries out the reaction epoxyqueuosine(34) in tRNA + AH2 = queuosine(34) in tRNA + A + H2O. It participates in tRNA modification; tRNA-queuosine biosynthesis. In terms of biological role, catalyzes the conversion of epoxyqueuosine (oQ) to queuosine (Q), which is a hypermodified base found in the wobble positions of tRNA(Asp), tRNA(Asn), tRNA(His) and tRNA(Tyr). The polypeptide is Epoxyqueuosine reductase (Staphylococcus aureus (strain NCTC 8325 / PS 47)).